A 301-amino-acid chain; its full sequence is Ribosomal protein L11 methyltransferase (301 aa).

T146, G167, D189, and N237 together coordinate S-adenosyl-L-methionine.

The protein belongs to the methyltransferase superfamily. PrmA family.

The protein localises to the cytoplasm. It catalyses the reaction L-lysyl-[protein] + 3 S-adenosyl-L-methionine = N(6),N(6),N(6)-trimethyl-L-lysyl-[protein] + 3 S-adenosyl-L-homocysteine + 3 H(+). Its function is as follows. Methylates ribosomal protein L11. This Prochlorococcus marinus (strain MIT 9313) protein is Ribosomal protein L11 methyltransferase.